Consider the following 367-residue polypeptide: Homoserine O-acetyltransferase (367 aa).

The AB hydrolase-1 domain occupies 44–350; it reads NAIMVTHAWT…AYGHDAFLLE (307 aa). The active-site Nucleophile is the S150. Substrate is bound at residue R217. Catalysis depends on residues D311 and H344. Residue D345 participates in substrate binding.

The protein belongs to the AB hydrolase superfamily. MetX family. As to quaternary structure, homodimer.

The protein resides in the cytoplasm. The enzyme catalyses L-homoserine + acetyl-CoA = O-acetyl-L-homoserine + CoA. Its pathway is amino-acid biosynthesis; L-methionine biosynthesis via de novo pathway; O-acetyl-L-homoserine from L-homoserine: step 1/1. Transfers an acetyl group from acetyl-CoA to L-homoserine, forming acetyl-L-homoserine. The sequence is that of Homoserine O-acetyltransferase from Geotalea daltonii (strain DSM 22248 / JCM 15807 / FRC-32) (Geobacter daltonii).